Reading from the N-terminus, the 264-residue chain is Small ribosomal subunit protein uS2 (264 aa).

This sequence belongs to the universal ribosomal protein uS2 family.

The chain is Small ribosomal subunit protein uS2 from Latilactobacillus sakei subsp. sakei (strain 23K) (Lactobacillus sakei subsp. sakei).